Reading from the N-terminus, the 296-residue chain is Giardin subunit alpha-2 (296 aa).

Annexin repeat units follow at residues 2–71 (PKLS…MDLF), 73–143 (DRHE…MEKW), 153–223 (GSPD…AHFA), and 226–293 (GMHK…TLWR).

The protein belongs to the annexin family. Giardin subunit alpha subfamily.

Its subcellular location is the cytoplasm. It localises to the cytoskeleton. Functionally, giardins are involved in parasite attachment to the intestinal mucosa and in the cytoskeletal disassembly and reassembly that marks the transition from infectious trophozoite to transmissible cyst. They may interact with other cytoskeletal proteins such as microtubules in the microribbons or crossbridges, to maintain the integrity of the ventral disk. This is Giardin subunit alpha-2 from Giardia intestinalis (Giardia lamblia).